The primary structure comprises 276 residues: Ribosomal RNA small subunit methyltransferase A (276 aa).

S-adenosyl-L-methionine contacts are provided by N27, L29, G54, E75, D101, and N122.

This sequence belongs to the class I-like SAM-binding methyltransferase superfamily. rRNA adenine N(6)-methyltransferase family. RsmA subfamily.

The protein resides in the cytoplasm. The catalysed reaction is adenosine(1518)/adenosine(1519) in 16S rRNA + 4 S-adenosyl-L-methionine = N(6)-dimethyladenosine(1518)/N(6)-dimethyladenosine(1519) in 16S rRNA + 4 S-adenosyl-L-homocysteine + 4 H(+). In terms of biological role, specifically dimethylates two adjacent adenosines (A1518 and A1519) in the loop of a conserved hairpin near the 3'-end of 16S rRNA in the 30S particle. May play a critical role in biogenesis of 30S subunits. The chain is Ribosomal RNA small subunit methyltransferase A from Brucella melitensis biotype 1 (strain ATCC 23456 / CCUG 17765 / NCTC 10094 / 16M).